We begin with the raw amino-acid sequence, 79 residues long: Conotoxin Cal9.2a (79 aa).

Positions 1–23 (MNCYLILTVALLLTSAMTGTTTA) are cleaved as a signal peptide. The propeptide occupies 24 to 33 (GQLNKKGVTL). Intrachain disulfides connect Cys-41-Cys-58, Cys-46-Cys-68, and Cys-48-Cys-73.

As to expression, expressed by the venom duct.

It localises to the secreted. In terms of biological role, probable neurotoxin with unknown target. Possibly targets ion channels. This Californiconus californicus (California cone) protein is Conotoxin Cal9.2a.